The chain runs to 147 residues: Large ribosomal subunit protein bL9 (147 aa).

It belongs to the bacterial ribosomal protein bL9 family.

Its function is as follows. Binds to the 23S rRNA. The sequence is that of Large ribosomal subunit protein bL9 from Mycoplasma capricolum subsp. capricolum (strain California kid / ATCC 27343 / NCTC 10154).